Here is a 344-residue protein sequence, read N- to C-terminus: Ion-translocating oxidoreductase complex subunit D (344 aa).

4 helical membrane-spanning segments follow: residues 23–43, 44–64, 77–99, and 120–140; these read LVLGACVPGLLTLTWLYGPGT, LLNLAWASLVALACEAAMLAL, SALVTALLLAVALPPYAPWWLTL, and PFNPAMLGYVVALVSFPLEMT. Thr172 bears the FMN phosphoryl threonine mark. 5 helical membrane-spanning segments follow: residues 198–218, 222–242, 252–272, 285–305, and 306–326; these read LGSAGSEWVNLAFLLGGLFLL, LFTWHAPLGMLAGLFAMSLLF, GSPLFHLFSGATMLGAFFIVT, LVFGLGVGVLTYVIRAWGGYP, and DGVAFAVLLMNLAAPTIDYYT.

It belongs to the NqrB/RnfD family. In terms of assembly, the complex is composed of six subunits: RnfA, RnfB, RnfC, RnfD, RnfE and RnfG. The cofactor is FMN.

Its subcellular location is the cell inner membrane. Its function is as follows. Part of a membrane-bound complex that couples electron transfer with translocation of ions across the membrane. This chain is Ion-translocating oxidoreductase complex subunit D, found in Pseudomonas aeruginosa (strain UCBPP-PA14).